Consider the following 350-residue polypeptide: Type II restriction enzyme NgoBI (350 aa).

It catalyses the reaction Endonucleolytic cleavage of DNA to give specific double-stranded fragments with terminal 5'-phosphates.. Its function is as follows. A P subtype restriction enzyme that recognizes the double-stranded sequence 5'-RGCGCY-3'; the cleavage site is unknown. The chain is Type II restriction enzyme NgoBI (ngoBIR) from Neisseria gonorrhoeae.